Reading from the N-terminus, the 339-residue chain is Uroporphyrinogen decarboxylase (339 aa).

Residues 21–25 (RQAGR), Phe-40, Asp-71, Tyr-147, Ser-202, and His-315 each bind substrate.

This sequence belongs to the uroporphyrinogen decarboxylase family. In terms of assembly, homodimer.

The protein resides in the cytoplasm. It carries out the reaction uroporphyrinogen III + 4 H(+) = coproporphyrinogen III + 4 CO2. It functions in the pathway porphyrin-containing compound metabolism; protoporphyrin-IX biosynthesis; coproporphyrinogen-III from 5-aminolevulinate: step 4/4. In terms of biological role, catalyzes the decarboxylation of four acetate groups of uroporphyrinogen-III to yield coproporphyrinogen-III. This chain is Uroporphyrinogen decarboxylase, found in Helicobacter pylori (strain ATCC 700392 / 26695) (Campylobacter pylori).